The sequence spans 360 residues: Fe(3+) ions import ATP-binding protein FbpC (360 aa).

Positions 4 to 236 constitute an ABC transporter domain; the sequence is LEIKGLHKHY…PKDRMIAEFL (233 aa). 36–43 contacts ATP; sequence GPSGCGKT.

The protein belongs to the ABC transporter superfamily. Fe(3+) ion importer (TC 3.A.1.10) family. In terms of assembly, the complex is composed of two ATP-binding proteins (FbpC), two transmembrane proteins (FbpB) and a solute-binding protein (FbpA).

The protein resides in the cell inner membrane. It carries out the reaction Fe(3+)(out) + ATP + H2O = Fe(3+)(in) + ADP + phosphate + H(+). Functionally, part of the ABC transporter complex FbpABC involved in Fe(3+) ions import. Responsible for energy coupling to the transport system. The polypeptide is Fe(3+) ions import ATP-binding protein FbpC (Mesorhizobium japonicum (strain LMG 29417 / CECT 9101 / MAFF 303099) (Mesorhizobium loti (strain MAFF 303099))).